Here is a 101-residue protein sequence, read N- to C-terminus: NAD(P)H-quinone oxidoreductase subunit 4L, chloroplastic (101 aa).

A run of 3 helical transmembrane segments spans residues 2–22 (ILEHVLVLSAYLFLIGLYGLI), 32–52 (MCLELILNAVNMNFVTFSDFF), and 61–81 (IFCIFVIAIAAAEAAIGLAIV).

This sequence belongs to the complex I subunit 4L family. NDH is composed of at least 16 different subunits, 5 of which are encoded in the nucleus.

The protein resides in the plastid. It is found in the chloroplast thylakoid membrane. It catalyses the reaction a plastoquinone + NADH + (n+1) H(+)(in) = a plastoquinol + NAD(+) + n H(+)(out). The catalysed reaction is a plastoquinone + NADPH + (n+1) H(+)(in) = a plastoquinol + NADP(+) + n H(+)(out). NDH shuttles electrons from NAD(P)H:plastoquinone, via FMN and iron-sulfur (Fe-S) centers, to quinones in the photosynthetic chain and possibly in a chloroplast respiratory chain. The immediate electron acceptor for the enzyme in this species is believed to be plastoquinone. Couples the redox reaction to proton translocation, and thus conserves the redox energy in a proton gradient. The polypeptide is NAD(P)H-quinone oxidoreductase subunit 4L, chloroplastic (Arabidopsis thaliana (Mouse-ear cress)).